A 270-amino-acid polypeptide reads, in one-letter code: MTLKIAIAGAGGRMGRQLIQAVHSAEGVELGAAFERKGSSLVGTDAGELAGIGHLGVAVSDDLESQKDKFDLLIDFTRPEGTLEHIAFCVANNKKMVIGTTGFDENGKTAIKAASDKIAIVFASNFSVGVNLVFKLLEKAAKVMGDYCDIEVIEAHHRHKVDAPSGTALSMGEHIAKTLGRDLKTHGVFCREGITGERKRDEIGFSTIRASDVVGEHTVWFADIGERVEISHKASSRMTFANGAVRAGKWLENKANGLFDMTDVLDLNNL.

Residues 9-14 and Glu-35 contribute to the NAD(+) site; that span reads GAGGRM. Arg-36 provides a ligand contact to NADP(+). Residues 99-101 and 123-126 each bind NAD(+); these read GTT and ASNF. His-156 acts as the Proton donor/acceptor in catalysis. His-157 is a binding site for (S)-2,3,4,5-tetrahydrodipicolinate. Lys-160 (proton donor) is an active-site residue. Residue 166–167 participates in (S)-2,3,4,5-tetrahydrodipicolinate binding; the sequence is GT.

This sequence belongs to the DapB family.

Its subcellular location is the cytoplasm. It carries out the reaction (S)-2,3,4,5-tetrahydrodipicolinate + NAD(+) + H2O = (2S,4S)-4-hydroxy-2,3,4,5-tetrahydrodipicolinate + NADH + H(+). The enzyme catalyses (S)-2,3,4,5-tetrahydrodipicolinate + NADP(+) + H2O = (2S,4S)-4-hydroxy-2,3,4,5-tetrahydrodipicolinate + NADPH + H(+). The protein operates within amino-acid biosynthesis; L-lysine biosynthesis via DAP pathway; (S)-tetrahydrodipicolinate from L-aspartate: step 4/4. Catalyzes the conversion of 4-hydroxy-tetrahydrodipicolinate (HTPA) to tetrahydrodipicolinate. The chain is 4-hydroxy-tetrahydrodipicolinate reductase from Haemophilus influenzae (strain PittGG).